The chain runs to 568 residues: Envelope glycoprotein E (568 aa).

A signal peptide spans 1-20 (MMPATLAGLALAVTVATMFA). Residues 21 to 422 (QRVDSTTIHH…GGGPGNSKRR (402 aa)) lie on the Virion surface side of the membrane. Residues asparagine 88, asparagine 179, and asparagine 248 are each glycosylated (N-linked (GlcNAc...) asparagine; by host). The cysteines at positions 271 and 280 are disulfide-linked. The chain crosses the membrane as a helical span at residues 423–443 (AAVLGAAVWIALTLLILGGLG). Residues 444–568 (AYVAVNKKCL…ANKTFPSQRY (125 aa)) are Intravirion-facing. The Internalization motif signature appears at 465–468 (KPTL). Residues 470–534 (THAHTYTSLP…SRRNSFGPTL (65 aa)) form a disordered region. The interval 482–497 (GDLSLEQDAEDEDEDE) is acidic. Residues 486–500 (LEQDAEDEDEDEEEL) are compositionally biased toward acidic residues. Basic residues predominate over residues 515 to 526 (KSSRSPSRRSSR).

The protein belongs to the alphaherpesvirinae glycoprotein E family. As to quaternary structure, interacts with gI. Post-translationally, phosphorylated on serines within the acidic cluster. Phosphorylation determines whether endocytosed viral gE traffics to the trans-Golgi network or recycles to the cell membrane.

The protein localises to the virion membrane. Its subcellular location is the host cell membrane. It is found in the host cell junction. The protein resides in the host Golgi apparatus membrane. It localises to the host endosome membrane. In terms of biological role, in epithelial cells, the heterodimer gE/gI is required for the cell-to-cell spread of the virus, by sorting nascent virions to cell junctions. Once the virus reaches the cell junctions, virus particles can spread to adjacent cells extremely rapidly through interactions with cellular receptors that accumulate at these junctions. Implicated in basolateral spread in polarized cells. In neuronal cells, gE/gI is essential for the anterograde spread of the infection throughout the host nervous system. Together with US9, the heterodimer gE/gI is involved in the sorting and transport of viral structural components toward axon tips. This Psittacid herpesvirus 1 (isolate Amazon parrot/-/97-0001/1997) (PsHV-1) protein is Envelope glycoprotein E (US8).